We begin with the raw amino-acid sequence, 102 residues long: Small ribosomal subunit protein uS10 (102 aa).

The protein belongs to the universal ribosomal protein uS10 family. As to quaternary structure, part of the 30S ribosomal subunit.

Involved in the binding of tRNA to the ribosomes. The sequence is that of Small ribosomal subunit protein uS10 from Moorella thermoacetica (strain ATCC 39073 / JCM 9320).